The primary structure comprises 124 residues: Class I hydrophobin 1 (124 aa).

A signal peptide spans 1 to 18; that stretch reads MRFSIATVVLSLAAMVVA. Cystine bridges form between Cys-35-Cys-85, Cys-43-Cys-79, Cys-44-Cys-63, and Cys-86-Cys-97.

It belongs to the fungal hydrophobin family.

It localises to the secreted. The protein localises to the cell wall. Its function is as follows. Aerial growth, conidiation, and dispersal of filamentous fungi in the environment rely upon a capability of their secreting small amphipathic proteins called hydrophobins (HPBs) with low sequence identity. Class I can self-assemble into an outermost layer of rodlet bundles on aerial cell surfaces, conferring cellular hydrophobicity that supports fungal growth, development and dispersal; whereas Class II form highly ordered films at water-air interfaces through intermolecular interactions but contribute nothing to the rodlet structure. In Botryotinia fuckeliana, hydrophobins are not involved in conferring surface hydrophobicity to conidia and aerial hyphae and their function in sclerotia and fruiting bodies remains to be investigated. This is Class I hydrophobin 1 (Bhp1) from Botryotinia fuckeliana (strain B05.10) (Noble rot fungus).